A 422-amino-acid polypeptide reads, in one-letter code: 26S proteasome non-ATPase regulatory subunit 11 (422 aa).

In terms of domain architecture, PCI spans 224 to 392 (DWKTAYSYFY…GVLIIFDEPP (169 aa)).

It belongs to the proteasome subunit S9 family. As to quaternary structure, component of the 19S proteasome regulatory particle complex. The 26S proteasome consists of a 20S core particle (CP) and two 19S regulatory subunits (RP). The regulatory particle is made of a lid composed of 9 subunits including PSMD11, a base containing 6 ATPases and few additional components.

It localises to the nucleus. The protein localises to the cytoplasm. The protein resides in the cytosol. In terms of biological role, component of the 26S proteasome, a multiprotein complex involved in the ATP-dependent degradation of ubiquitinated proteins. This complex plays a key role in the maintenance of protein homeostasis by removing misfolded or damaged proteins, which could impair cellular functions, and by removing proteins whose functions are no longer required. Therefore, the proteasome participates in numerous cellular processes, including cell cycle progression, apoptosis, or DNA damage repair. In the complex, PSMD11 is required for proteasome assembly. Plays a key role in increased proteasome activity in embryonic stem cells (ESCs): its high expression in ESCs promotes enhanced assembly of the 26S proteasome, followed by higher proteasome activity. This is 26S proteasome non-ATPase regulatory subunit 11 (psmd11) from Xenopus tropicalis (Western clawed frog).